Here is a 481-residue protein sequence, read N- to C-terminus: Glutamate--tRNA ligase (481 aa).

The 'HIGH' region motif lies at Pro9–Thr19. A 'KMSKS' region motif is present at residues Lys249 to Arg253. Lys252 provides a ligand contact to ATP.

Belongs to the class-I aminoacyl-tRNA synthetase family. Glutamate--tRNA ligase type 1 subfamily. Monomer.

It localises to the cytoplasm. The catalysed reaction is tRNA(Glu) + L-glutamate + ATP = L-glutamyl-tRNA(Glu) + AMP + diphosphate. Functionally, catalyzes the attachment of glutamate to tRNA(Glu) in a two-step reaction: glutamate is first activated by ATP to form Glu-AMP and then transferred to the acceptor end of tRNA(Glu). This is Glutamate--tRNA ligase from Picosynechococcus sp. (strain ATCC 27264 / PCC 7002 / PR-6) (Agmenellum quadruplicatum).